The following is a 294-amino-acid chain: N-acetylmuramic acid 6-phosphate etherase (294 aa).

The region spanning Val-54–Lys-217 is the SIS domain. Glu-82 functions as the Proton donor in the catalytic mechanism. Glu-113 is an active-site residue.

It belongs to the GCKR-like family. MurNAc-6-P etherase subfamily. In terms of assembly, homodimer.

The enzyme catalyses N-acetyl-D-muramate 6-phosphate + H2O = N-acetyl-D-glucosamine 6-phosphate + (R)-lactate. It participates in amino-sugar metabolism; N-acetylmuramate degradation. Functionally, specifically catalyzes the cleavage of the D-lactyl ether substituent of MurNAc 6-phosphate, producing GlcNAc 6-phosphate and D-lactate. This Bacillus cereus (strain AH187) protein is N-acetylmuramic acid 6-phosphate etherase.